We begin with the raw amino-acid sequence, 472 residues long: Eukaryotic translation initiation factor 2 subunit 3 (472 aa).

In terms of domain architecture, tr-type G spans 39 to 247 (QATINIGTIG…YIVNKIPVPV (209 aa)). Positions 48–55 (GHVAHGKS) are G1. Position 51–56 (51–56 (AHGKST)) interacts with GTP. The G2 stretch occupies residues 76 to 80 (NITIK). Positions 134 to 137 (DCPG) are G3. GTP-binding positions include 190-193 (NKID) and 225-227 (SAQ). Residues 190 to 193 (NKID) are G4. The segment at 225–227 (SAQ) is G5. Positions 457-469 (GQIRRGVTITPTV) are interacts with cdc123.

Belongs to the TRAFAC class translation factor GTPase superfamily. Classic translation factor GTPase family. EIF2G subfamily. In terms of assembly, eukaryotic translation initiation factor 2 eIF2 is a heterotrimeric complex composed of an alpha (EIF2S1), a beta (EIF2S2) and a gamma (EIF2S3) chain. eIF2 is member of the 43S pre-initiation complex (43S PIC).

Its subcellular location is the cytoplasm. It localises to the cytosol. The catalysed reaction is GTP + H2O = GDP + phosphate + H(+). Member of the eIF2 complex that functions in the early steps of protein synthesis by forming a ternary complex with GTP and initiator tRNA. This complex binds to a 40S ribosomal subunit, followed by mRNA binding to form the 43S pre-initiation complex (43S PIC). Junction of the 60S ribosomal subunit to form the 80S initiation complex is preceded by hydrolysis of the GTP bound to eIF2 and release of an eIF2-GDP binary complex. In order for eIF2 to recycle and catalyze another round of initiation, the GDP bound to eIF2 must exchange with GTP by way of a reaction catalyzed by eIF-2B. This Danio rerio (Zebrafish) protein is Eukaryotic translation initiation factor 2 subunit 3.